The chain runs to 570 residues: Pentatricopeptide repeat-containing protein At1g31430 (570 aa).

PPR repeat units lie at residues 10 to 44 (SLLM…GLYP), 45 to 79 (DNFT…GLEF), 80 to 110 (DSYV…MPQR), 111 to 141 (DVVS…MSQE), 147 to 177 (DEGT…VVTE), 181 to 215 (SVRI…NVKC), 216 to 242 (WTSM…SPVK), 243 to 277 (DVVL…GIRP), 278 to 312 (DNFV…RVTV), 313 to 343 (DKVV…IKER), 344 to 378 (DTAS…GVRL), 379 to 414 (DAIT…NVQP), and 415 to 449 (KSEH…SDET). The interval 453-528 (VYCSLLSAAR…FPGCSSIEID (76 aa)) is type E motif. A type E(+) motif region spans residues 529 to 561 (GVGHEFIVGDDLLSHPKMDEINSMLHQTTNLML).

The protein belongs to the PPR family. PCMP-E subfamily.

The polypeptide is Pentatricopeptide repeat-containing protein At1g31430 (PCMP-E55) (Arabidopsis thaliana (Mouse-ear cress)).